A 454-amino-acid chain; its full sequence is Arginine biosynthesis bifunctional protein ArgJ, mitochondrial (454 aa).

Substrate is bound by residues threonine 184, lysine 213, threonine 224, glutamate 311, asparagine 449, and threonine 454. Catalysis depends on threonine 224, which acts as the Nucleophile.

This sequence belongs to the ArgJ family. In terms of assembly, heterodimer of an alpha and a beta chain. In terms of processing, the alpha and beta chains are autoproteolytically processed from a single precursor protein within the mitochondrion.

The protein resides in the mitochondrion matrix. It catalyses the reaction N(2)-acetyl-L-ornithine + L-glutamate = N-acetyl-L-glutamate + L-ornithine. It carries out the reaction L-glutamate + acetyl-CoA = N-acetyl-L-glutamate + CoA + H(+). It participates in amino-acid biosynthesis; L-arginine biosynthesis; L-ornithine and N-acetyl-L-glutamate from L-glutamate and N(2)-acetyl-L-ornithine (cyclic): step 1/1. It functions in the pathway amino-acid biosynthesis; L-arginine biosynthesis; N(2)-acetyl-L-ornithine from L-glutamate: step 1/4. Catalyzes two activities which are involved in the cyclic version of arginine biosynthesis: the synthesis of acetylglutamate from glutamate and acetyl-CoA, and of ornithine by transacetylation between acetylornithine and glutamate. The sequence is that of Arginine biosynthesis bifunctional protein ArgJ, mitochondrial from Aspergillus clavatus (strain ATCC 1007 / CBS 513.65 / DSM 816 / NCTC 3887 / NRRL 1 / QM 1276 / 107).